The following is an 85-amino-acid chain: Small ribosomal subunit protein bS18 (85 aa).

The protein belongs to the bacterial ribosomal protein bS18 family. As to quaternary structure, part of the 30S ribosomal subunit. Forms a tight heterodimer with protein bS6.

In terms of biological role, binds as a heterodimer with protein bS6 to the central domain of the 16S rRNA, where it helps stabilize the platform of the 30S subunit. In Helicobacter pylori (strain Shi470), this protein is Small ribosomal subunit protein bS18.